The chain runs to 705 residues: uncharacterized protein (705 aa).

Residues serine 554 and histidine 676 each act as charge relay system in the active site.

This sequence belongs to the peptidase S9A family.

This is an uncharacterized protein from Sinorhizobium fredii (strain NBRC 101917 / NGR234).